The chain runs to 293 residues: 4-hydroxy-tetrahydrodipicolinate synthase (293 aa).

Threonine 50 provides a ligand contact to pyruvate. The active-site Proton donor/acceptor is tyrosine 138. Residue lysine 166 is the Schiff-base intermediate with substrate of the active site. Valine 206 is a binding site for pyruvate.

The protein belongs to the DapA family. As to quaternary structure, homotetramer; dimer of dimers.

It localises to the cytoplasm. The enzyme catalyses L-aspartate 4-semialdehyde + pyruvate = (2S,4S)-4-hydroxy-2,3,4,5-tetrahydrodipicolinate + H2O + H(+). It functions in the pathway amino-acid biosynthesis; L-lysine biosynthesis via DAP pathway; (S)-tetrahydrodipicolinate from L-aspartate: step 3/4. Its function is as follows. Catalyzes the condensation of (S)-aspartate-beta-semialdehyde [(S)-ASA] and pyruvate to 4-hydroxy-tetrahydrodipicolinate (HTPA). The sequence is that of 4-hydroxy-tetrahydrodipicolinate synthase from Cutibacterium acnes (strain DSM 16379 / KPA171202) (Propionibacterium acnes).